The primary structure comprises 129 residues: Large ribosomal subunit protein bL12 (129 aa).

This sequence belongs to the bacterial ribosomal protein bL12 family. Homodimer. Part of the ribosomal stalk of the 50S ribosomal subunit. Forms a multimeric L10(L12)X complex, where L10 forms an elongated spine to which 2 to 4 L12 dimers bind in a sequential fashion. Binds GTP-bound translation factors.

Forms part of the ribosomal stalk which helps the ribosome interact with GTP-bound translation factors. Is thus essential for accurate translation. This is Large ribosomal subunit protein bL12 from Pelotomaculum thermopropionicum (strain DSM 13744 / JCM 10971 / SI).